The primary structure comprises 672 residues: uncharacterized protein (672 aa).

Positions 1 to 10 (MAKSDGDDPL) are enriched in basic and acidic residues. Residues 1–40 (MAKSDGDDPLRPASPRLRSSRRHSLRYSAYTGGPDPLAPP) form a disordered region.

This is an uncharacterized protein from Mycobacterium tuberculosis (strain CDC 1551 / Oshkosh).